The primary structure comprises 216 residues: Ras-related protein Rab-5C (216 aa).

15 residues coordinate GTP: serine 30, alanine 31, glycine 33, lysine 34, serine 35, serine 36, histidine 47, glutamate 48, threonine 53, glycine 79, asparagine 134, lysine 135, aspartate 137, alanine 165, and lysine 166. Serine 35 contributes to the Mg(2+) binding site. Short sequence motifs (switch) lie at residues 45-57 (QFHEYQESTIGAA) and 78-94 (AGQERYHSLAPMYYRGA). Threonine 53 lines the Mg(2+) pocket. Residues 184 to 216 (KNEPQNAPGGPGRNRVVDLQESSQPSRSQCCSN) are disordered. The segment covering 203–216 (QESSQPSRSQCCSN) has biased composition (polar residues). 2 S-geranylgeranyl cysteine lipidation sites follow: cysteine 213 and cysteine 214.

This sequence belongs to the small GTPase superfamily. Rab family. It depends on Mg(2+) as a cofactor. Detected in brain, ovary, rectum, small intestine, large intestine, liver, spleen, follicle and kidney (at protein level).

The protein localises to the cell membrane. The protein resides in the early endosome membrane. The enzyme catalyses GTP + H2O = GDP + phosphate + H(+). Its activity is regulated as follows. Regulated by guanine nucleotide exchange factors (GEFs) which promote the exchange of bound GDP for free GTP. Regulated by GTPase activating proteins (GAPs) which increase the GTP hydrolysis activity. Inhibited by GDP dissociation inhibitors (GDIs). The small GTPases Rab are key regulators of intracellular membrane trafficking, from the formation of transport vesicles to their fusion with membranes. Rabs cycle between an inactive GDP-bound form and an active GTP-bound form that is able to recruit to membranes different sets of downstream effectors directly responsible for vesicle formation, movement, tethering and fusion. This chain is Ras-related protein Rab-5C (RAB5C), found in Gallus gallus (Chicken).